The following is a 565-amino-acid chain: Berberine bridge enzyme-like C-2 (565 aa).

Positions 1–17 are cleaved as a signal peptide; it reads MFPIIILISFSFTFLFA. N-linked (GlcNAc...) asparagine glycans are attached at residues Asn-28 and Asn-40. Cys-32 and Cys-94 are disulfide-bonded. The FAD-binding PCMH-type domain maps to 72–248; the sequence is YMPKPTVIIL…YAWKIRLLKV (177 aa). The residue at position 109 (His-109) is a Pros-8alpha-FAD histidine. Asn-363 and Asn-502 each carry an N-linked (GlcNAc...) asparagine glycan.

It belongs to the oxygen-dependent FAD-linked oxidoreductase family. Requires FAD as cofactor.

The protein resides in the vacuole. Its pathway is alkaloid biosynthesis; nicotine biosynthesis. Functionally, involved in the biosynthesis of pyridine alkaloid natural products, leading mainly to the production of anabasine, anatabine, nicotine and nornicotine, effective deterrents against herbivores with antiparasitic and pesticide properties (neurotoxins); nornicotine serves as the precursor in the synthesis of the carcinogen compound N'-nitrosonornicotine (NNN). Catalyzes a late oxidation step subsequent to the pyridine ring condensation reaction in the biosynthesis of alkaloids. The chain is Berberine bridge enzyme-like C-2 from Nicotiana tabacum (Common tobacco).